A 205-amino-acid polypeptide reads, in one-letter code: Holliday junction branch migration complex subunit RuvA (205 aa).

The interval 1–64 (MIGKLKGIID…EDQIKLFGFR (64 aa)) is domain I. The segment at 65-143 (TDTEREWFRL…ALSAVDPAVV (79 aa)) is domain II. The interval 144–154 (KLSGAIDDNRA) is flexible linker. Residues 154–205 (APRAVTDAISALVNLGYGQPQAAAAVATASRTAGEDAETAQLIKLGLKELSK) form a domain III region.

The protein belongs to the RuvA family. In terms of assembly, homotetramer. Forms an RuvA(8)-RuvB(12)-Holliday junction (HJ) complex. HJ DNA is sandwiched between 2 RuvA tetramers; dsDNA enters through RuvA and exits via RuvB. An RuvB hexamer assembles on each DNA strand where it exits the tetramer. Each RuvB hexamer is contacted by two RuvA subunits (via domain III) on 2 adjacent RuvB subunits; this complex drives branch migration. In the full resolvosome a probable DNA-RuvA(4)-RuvB(12)-RuvC(2) complex forms which resolves the HJ.

The protein resides in the cytoplasm. The RuvA-RuvB-RuvC complex processes Holliday junction (HJ) DNA during genetic recombination and DNA repair, while the RuvA-RuvB complex plays an important role in the rescue of blocked DNA replication forks via replication fork reversal (RFR). RuvA specifically binds to HJ cruciform DNA, conferring on it an open structure. The RuvB hexamer acts as an ATP-dependent pump, pulling dsDNA into and through the RuvAB complex. HJ branch migration allows RuvC to scan DNA until it finds its consensus sequence, where it cleaves and resolves the cruciform DNA. The sequence is that of Holliday junction branch migration complex subunit RuvA from Rhodopseudomonas palustris (strain TIE-1).